The primary structure comprises 275 residues: Diaminopimelate epimerase (275 aa).

Positions 12, 45, and 65 each coordinate substrate. Cysteine 74 acts as the Proton donor in catalysis. Substrate is bound by residues 75–76, asparagine 158, asparagine 191, and 209–210; these read GN and ER. The Proton acceptor role is filled by cysteine 218. 219 to 220 is a binding site for substrate; it reads GT.

This sequence belongs to the diaminopimelate epimerase family. In terms of assembly, homodimer.

Its subcellular location is the cytoplasm. The enzyme catalyses (2S,6S)-2,6-diaminopimelate = meso-2,6-diaminopimelate. Its pathway is amino-acid biosynthesis; L-lysine biosynthesis via DAP pathway; DL-2,6-diaminopimelate from LL-2,6-diaminopimelate: step 1/1. In terms of biological role, catalyzes the stereoinversion of LL-2,6-diaminopimelate (L,L-DAP) to meso-diaminopimelate (meso-DAP), a precursor of L-lysine and an essential component of the bacterial peptidoglycan. The sequence is that of Diaminopimelate epimerase from Shewanella putrefaciens (strain CN-32 / ATCC BAA-453).